The following is a 464-amino-acid chain: NADH-ubiquinone oxidoreductase chain 4 (464 aa).

13 consecutive transmembrane segments (helical) span residues 1–21 (MMIT…VIPQ), 63–83 (SISA…LIAS), 98–118 (FIII…ALEL), 119–139 (LLFY…ITRW), 152–172 (FMFY…AIYI), 197–217 (IWWA…GFHL), 227–247 (PVAG…YGLI), 261–281 (LSLA…IICV), 288–308 (ALIA…IFSS), 314–334 (NGAL…FSLA), 355–375 (ILPL…GLPP), 389–409 (LIAW…FGAI), and 443–463 (LHTL…ITWL).

This sequence belongs to the complex I subunit 4 family.

The protein localises to the mitochondrion membrane. The enzyme catalyses a ubiquinone + NADH + 5 H(+)(in) = a ubiquinol + NAD(+) + 4 H(+)(out). Functionally, core subunit of the mitochondrial membrane respiratory chain NADH dehydrogenase (Complex I) that is believed to belong to the minimal assembly required for catalysis. Complex I functions in the transfer of electrons from NADH to the respiratory chain. The immediate electron acceptor for the enzyme is believed to be ubiquinone. The chain is NADH-ubiquinone oxidoreductase chain 4 (ND4) from Paracentrotus lividus (Common sea urchin).